The following is a 310-amino-acid chain: tRNA-cytidine(32) 2-sulfurtransferase (310 aa).

The PP-loop motif signature appears at 45-50; the sequence is SGGKDS. [4Fe-4S] cluster-binding residues include Cys120, Cys123, and Cys211.

Belongs to the TtcA family. Homodimer. Mg(2+) serves as cofactor. The cofactor is [4Fe-4S] cluster.

It localises to the cytoplasm. It catalyses the reaction cytidine(32) in tRNA + S-sulfanyl-L-cysteinyl-[cysteine desulfurase] + AH2 + ATP = 2-thiocytidine(32) in tRNA + L-cysteinyl-[cysteine desulfurase] + A + AMP + diphosphate + H(+). It participates in tRNA modification. Catalyzes the ATP-dependent 2-thiolation of cytidine in position 32 of tRNA, to form 2-thiocytidine (s(2)C32). The sulfur atoms are provided by the cysteine/cysteine desulfurase (IscS) system. This is tRNA-cytidine(32) 2-sulfurtransferase from Shewanella baltica (strain OS185).